A 282-amino-acid polypeptide reads, in one-letter code: Pantothenate synthetase (282 aa).

An ATP-binding site is contributed by 30–37; it reads MGNLHLGH. Histidine 37 (proton donor) is an active-site residue. Position 61 (glutamine 61) interacts with (R)-pantoate. Position 61 (glutamine 61) interacts with beta-alanine. Position 149–152 (149–152) interacts with ATP; the sequence is GQKD. A (R)-pantoate-binding site is contributed by glutamine 155. ATP contacts are provided by residues isoleucine 178 and 186–189; that span reads MSSR.

It belongs to the pantothenate synthetase family. In terms of assembly, homodimer.

The protein resides in the cytoplasm. It carries out the reaction (R)-pantoate + beta-alanine + ATP = (R)-pantothenate + AMP + diphosphate + H(+). Its pathway is cofactor biosynthesis; (R)-pantothenate biosynthesis; (R)-pantothenate from (R)-pantoate and beta-alanine: step 1/1. Functionally, catalyzes the condensation of pantoate with beta-alanine in an ATP-dependent reaction via a pantoyl-adenylate intermediate. This Shewanella piezotolerans (strain WP3 / JCM 13877) protein is Pantothenate synthetase.